The following is a 218-amino-acid chain: Pyridoxine/pyridoxamine 5'-phosphate oxidase (218 aa).

Residues 14-17 (RREY) and Lys-72 each bind substrate. Residues 67–72 (RIVLLK), 82–83 (YT), Arg-88, Lys-89, and Gln-111 contribute to the FMN site. The substrate site is built by Tyr-129, Arg-133, and Ser-137. Residues 146–147 (QS) and Trp-191 contribute to the FMN site. Residue 197-199 (RLH) coordinates substrate. Position 201 (Arg-201) interacts with FMN.

Belongs to the pyridoxamine 5'-phosphate oxidase family. As to quaternary structure, homodimer. The cofactor is FMN.

It catalyses the reaction pyridoxamine 5'-phosphate + O2 + H2O = pyridoxal 5'-phosphate + H2O2 + NH4(+). The enzyme catalyses pyridoxine 5'-phosphate + O2 = pyridoxal 5'-phosphate + H2O2. It functions in the pathway cofactor metabolism; pyridoxal 5'-phosphate salvage; pyridoxal 5'-phosphate from pyridoxamine 5'-phosphate: step 1/1. It participates in cofactor metabolism; pyridoxal 5'-phosphate salvage; pyridoxal 5'-phosphate from pyridoxine 5'-phosphate: step 1/1. Catalyzes the oxidation of either pyridoxine 5'-phosphate (PNP) or pyridoxamine 5'-phosphate (PMP) into pyridoxal 5'-phosphate (PLP). The chain is Pyridoxine/pyridoxamine 5'-phosphate oxidase from Escherichia coli (strain SMS-3-5 / SECEC).